A 234-amino-acid chain; its full sequence is Large ribosomal subunit protein uL1 (234 aa).

The protein belongs to the universal ribosomal protein uL1 family. As to quaternary structure, part of the 50S ribosomal subunit.

Functionally, binds directly to 23S rRNA. The L1 stalk is quite mobile in the ribosome, and is involved in E site tRNA release. Protein L1 is also a translational repressor protein, it controls the translation of the L11 operon by binding to its mRNA. This Serratia proteamaculans (strain 568) protein is Large ribosomal subunit protein uL1.